The following is a 251-amino-acid chain: Triosephosphate isomerase (251 aa).

Position 9–11 (9–11 (NWK)) interacts with substrate. H95 serves as the catalytic Electrophile. E167 acts as the Proton acceptor in catalysis. Residues G173, S212, and 233–234 (GG) contribute to the substrate site.

Belongs to the triosephosphate isomerase family. As to quaternary structure, homodimer.

It localises to the cytoplasm. The catalysed reaction is D-glyceraldehyde 3-phosphate = dihydroxyacetone phosphate. It functions in the pathway carbohydrate biosynthesis; gluconeogenesis. It participates in carbohydrate degradation; glycolysis; D-glyceraldehyde 3-phosphate from glycerone phosphate: step 1/1. In terms of biological role, involved in the gluconeogenesis. Catalyzes stereospecifically the conversion of dihydroxyacetone phosphate (DHAP) to D-glyceraldehyde-3-phosphate (G3P). In Pseudomonas putida (strain W619), this protein is Triosephosphate isomerase.